Reading from the N-terminus, the 316-residue chain is 4-diphosphocytidyl-2-C-methyl-D-erythritol kinase (316 aa).

Lys23 is an active-site residue. 108–118 (PVAGGMAGGSA) is an ATP binding site. Residue Asp150 is part of the active site.

This sequence belongs to the GHMP kinase family. IspE subfamily.

It carries out the reaction 4-CDP-2-C-methyl-D-erythritol + ATP = 4-CDP-2-C-methyl-D-erythritol 2-phosphate + ADP + H(+). It functions in the pathway isoprenoid biosynthesis; isopentenyl diphosphate biosynthesis via DXP pathway; isopentenyl diphosphate from 1-deoxy-D-xylulose 5-phosphate: step 3/6. Its function is as follows. Catalyzes the phosphorylation of the position 2 hydroxy group of 4-diphosphocytidyl-2C-methyl-D-erythritol. The sequence is that of 4-diphosphocytidyl-2-C-methyl-D-erythritol kinase from Mycolicibacterium paratuberculosis (strain ATCC BAA-968 / K-10) (Mycobacterium paratuberculosis).